A 204-amino-acid chain; its full sequence is Methyl-CpG-binding domain-containing protein 1 (204 aa).

The tract at residues 1-46 (MLPFPAMNLKKSRSENSSVASSGSKIEEQTEKSAEPTTIKVQKKAG) is disordered. Residues 15–24 (ENSSVASSGS) are compositionally biased toward polar residues. The span at 25–34 (KIEEQTEKSA) shows a compositional bias: basic and acidic residues. The CW-type zinc-finger motif lies at 49 to 104 (GRSIDVFAVQCEKCMKWRKIDTQDEYEDIRSRVQEDPFFCKTKEGVSCEDVGDLNY). An MBD-associated domain (MAD) motif is present at residues 58 to 96 (QCEKCMKWRKIDTQDEYEDIRSRVQEDPFFCKTKEGVSC). Zn(2+) contacts are provided by Cys59, Cys62, Cys88, and Cys96. One can recognise an MBD domain in the interval 110-180 (WVIDKPGLPR…GDFNFTVPKV (71 aa)).

Mostly expressed in flowers and buds.

Its subcellular location is the nucleus. Its function is as follows. Probable transcriptional regulator. The polypeptide is Methyl-CpG-binding domain-containing protein 1 (MBD1) (Arabidopsis thaliana (Mouse-ear cress)).